We begin with the raw amino-acid sequence, 142 residues long: MKFLGIDYGQRRTGIAVTDAGGRMAFPRRTIAMTTRDAFFVELLGMVEVECPDAFVVGLPRLPGGEETLTTRQVRNFVERLKRRTTLPVYFMPEELSSFEAEDDLRDAGLRGRRLEAVVDQQAAVRILESFLAVPEERRSLA.

Belongs to the YqgF nuclease family.

It localises to the cytoplasm. Functionally, could be a nuclease involved in processing of the 5'-end of pre-16S rRNA. This chain is Putative pre-16S rRNA nuclease, found in Nitratidesulfovibrio vulgaris (strain DP4) (Desulfovibrio vulgaris).